A 149-amino-acid polypeptide reads, in one-letter code: Transcriptional repressor NrdR (149 aa).

A zinc finger lies at 3–34 (CPYCSYEESKVVDSRSAEDYNAIRRRRECLRC). Residues 49–139 (ILVIKKDLSR…VYRQFKDINT (91 aa)) enclose the ATP-cone domain.

It belongs to the NrdR family. Requires Zn(2+) as cofactor.

Its function is as follows. Negatively regulates transcription of bacterial ribonucleotide reductase nrd genes and operons by binding to NrdR-boxes. This Clostridium perfringens (strain ATCC 13124 / DSM 756 / JCM 1290 / NCIMB 6125 / NCTC 8237 / Type A) protein is Transcriptional repressor NrdR.